The chain runs to 33 residues: rho operon leader peptide (33 aa).

The span at 1-25 (MRSEQISGSSLNPSCRFSSAYSPVT) shows a compositional bias: polar residues. A disordered region spans residues 1-33 (MRSEQISGSSLNPSCRFSSAYSPVTRQRKDMSR).

The polypeptide is rho operon leader peptide (rhoL) (Escherichia coli O157:H7).